Reading from the N-terminus, the 378-residue chain is MTASFAFTIEHRDGEARAGTFATPHGPVYTPCFMPVGTQATVKTLTPAQLAETGAQMILANTYHLSLQPGADIVAGAGGLHGFMQWPGPILTDSGGFQVFSLSSLRTIDDDGVTFREPKSGALVRFTPEHAVAVQNALGADVIMAFDECPPYPADREQVEGAVERTLRWFERCVEAHRRSDQALFGIVQGGVWPDLRRRCAEGLVAADLPGYAIGGVSVGEPQTLIERVVRVTAPLLPEHKPRYLMGVGTFREMAQAVAVGVDLFDCVMPTRVARHGSALLLGTGGDRRINLKNAQFRRDYEPLDCVCPCYTCRHFSRAYLAHLVRSEEILAMTLLSIHNVATLTRFAALLRCAIATGSFAQEFAHYLQSGPEPVLSN.

The Proton acceptor role is filled by D93. Substrate contacts are provided by residues 93–97, D147, Q189, and G216; that span reads DSGGF. Positions 247-253 are RNA binding; sequence GVGTFRE. D266 (nucleophile) is an active-site residue. The segment at 271–275 is RNA binding; important for wobble base 34 recognition; sequence TRVAR. Residues C308, C310, C313, and H339 each contribute to the Zn(2+) site.

It belongs to the queuine tRNA-ribosyltransferase family. As to quaternary structure, homodimer. Within each dimer, one monomer is responsible for RNA recognition and catalysis, while the other monomer binds to the replacement base PreQ1. Zn(2+) serves as cofactor.

It carries out the reaction 7-aminomethyl-7-carbaguanine + guanosine(34) in tRNA = 7-aminomethyl-7-carbaguanosine(34) in tRNA + guanine. It functions in the pathway tRNA modification; tRNA-queuosine biosynthesis. Its function is as follows. Catalyzes the base-exchange of a guanine (G) residue with the queuine precursor 7-aminomethyl-7-deazaguanine (PreQ1) at position 34 (anticodon wobble position) in tRNAs with GU(N) anticodons (tRNA-Asp, -Asn, -His and -Tyr). Catalysis occurs through a double-displacement mechanism. The nucleophile active site attacks the C1' of nucleotide 34 to detach the guanine base from the RNA, forming a covalent enzyme-RNA intermediate. The proton acceptor active site deprotonates the incoming PreQ1, allowing a nucleophilic attack on the C1' of the ribose to form the product. After dissociation, two additional enzymatic reactions on the tRNA convert PreQ1 to queuine (Q), resulting in the hypermodified nucleoside queuosine (7-(((4,5-cis-dihydroxy-2-cyclopenten-1-yl)amino)methyl)-7-deazaguanosine). This is Queuine tRNA-ribosyltransferase from Gloeobacter violaceus (strain ATCC 29082 / PCC 7421).